A 123-amino-acid polypeptide reads, in one-letter code: D-ribose pyranase (123 aa).

The active-site Proton donor is histidine 20. Residues aspartate 28, histidine 90, and 112-114 each bind substrate; that span reads YAN.

Belongs to the RbsD / FucU family. RbsD subfamily. Homodecamer.

The protein resides in the cytoplasm. It carries out the reaction beta-D-ribopyranose = beta-D-ribofuranose. It participates in carbohydrate metabolism; D-ribose degradation; D-ribose 5-phosphate from beta-D-ribopyranose: step 1/2. Catalyzes the interconversion of beta-pyran and beta-furan forms of D-ribose. This Corynebacterium glutamicum (strain R) protein is D-ribose pyranase.